Reading from the N-terminus, the 631-residue chain is Phosphomethylpyrimidine synthase (631 aa).

Substrate is bound by residues asparagine 239, methionine 268, tyrosine 297, histidine 333, 353–355, 394–397, and glutamate 433; these read SRG and DGLR. Histidine 437 is a Zn(2+) binding site. A substrate-binding site is contributed by tyrosine 460. Histidine 501 is a Zn(2+) binding site. Cysteine 581, cysteine 584, and cysteine 589 together coordinate [4Fe-4S] cluster.

This sequence belongs to the ThiC family. Homodimer. Requires [4Fe-4S] cluster as cofactor.

It carries out the reaction 5-amino-1-(5-phospho-beta-D-ribosyl)imidazole + S-adenosyl-L-methionine = 4-amino-2-methyl-5-(phosphooxymethyl)pyrimidine + CO + 5'-deoxyadenosine + formate + L-methionine + 3 H(+). It participates in cofactor biosynthesis; thiamine diphosphate biosynthesis. In terms of biological role, catalyzes the synthesis of the hydroxymethylpyrimidine phosphate (HMP-P) moiety of thiamine from aminoimidazole ribotide (AIR) in a radical S-adenosyl-L-methionine (SAM)-dependent reaction. The polypeptide is Phosphomethylpyrimidine synthase (Ralstonia nicotianae (strain ATCC BAA-1114 / GMI1000) (Ralstonia solanacearum)).